Reading from the N-terminus, the 306-residue chain is Tryptophan 2,3-dioxygenase (306 aa).

Residues 1–33 are disordered; sequence MQPPGDDAAPRCPFAGAHAPDAPHVPEAAGDDA. Substrate is bound by residues 75 to 79, Tyr-137, and Arg-141; that span reads FIIQH. Residue His-264 coordinates heme. Thr-278 contributes to the substrate binding site.

It belongs to the tryptophan 2,3-dioxygenase family. As to quaternary structure, homotetramer. The cofactor is heme.

The catalysed reaction is L-tryptophan + O2 = N-formyl-L-kynurenine. Its pathway is amino-acid degradation; L-tryptophan degradation via kynurenine pathway; L-kynurenine from L-tryptophan: step 1/2. Its function is as follows. Heme-dependent dioxygenase that catalyzes the oxidative cleavage of the L-tryptophan (L-Trp) pyrrole ring and converts L-tryptophan to N-formyl-L-kynurenine. Catalyzes the oxidative cleavage of the indole moiety. This chain is Tryptophan 2,3-dioxygenase, found in Burkholderia pseudomallei (strain 1106a).